The primary structure comprises 177 residues: MSRVAKAPVAIPAGVEVKLNGQEVTVKGSKGELTRVLNSAVVIAQEENNLTFGPKEGVTNAWAQAGTARALVNNMVVGVTEGFTKKLTLKGVGYRAAMKGNAVGLTLGFSHPVEHALPEGIKAECPSQTEIVITGCDKQVVGQVAADIRSYRAPEPYKGKGVRYADENVRTKEAKKK.

The protein belongs to the universal ribosomal protein uL6 family. As to quaternary structure, part of the 50S ribosomal subunit.

Functionally, this protein binds to the 23S rRNA, and is important in its secondary structure. It is located near the subunit interface in the base of the L7/L12 stalk, and near the tRNA binding site of the peptidyltransferase center. The sequence is that of Large ribosomal subunit protein uL6 from Vibrio atlanticus (strain LGP32) (Vibrio splendidus (strain Mel32)).